A 242-amino-acid polypeptide reads, in one-letter code: Enolase-phosphatase E1 (242 aa).

It belongs to the HAD-like hydrolase superfamily. MasA/MtnC family. As to quaternary structure, monomer. Requires Mg(2+) as cofactor.

It carries out the reaction 5-methylsulfanyl-2,3-dioxopentyl phosphate + H2O = 1,2-dihydroxy-5-(methylsulfanyl)pent-1-en-3-one + phosphate. It participates in amino-acid biosynthesis; L-methionine biosynthesis via salvage pathway; L-methionine from S-methyl-5-thio-alpha-D-ribose 1-phosphate: step 3/6. The protein operates within amino-acid biosynthesis; L-methionine biosynthesis via salvage pathway; L-methionine from S-methyl-5-thio-alpha-D-ribose 1-phosphate: step 4/6. Its function is as follows. Bifunctional enzyme that catalyzes the enolization of 2,3-diketo-5-methylthiopentyl-1-phosphate (DK-MTP-1-P) into the intermediate 2-hydroxy-3-keto-5-methylthiopentenyl-1-phosphate (HK-MTPenyl-1-P), which is then dephosphorylated to form the acireductone 1,2-dihydroxy-3-keto-5-methylthiopentene (DHK-MTPene). The sequence is that of Enolase-phosphatase E1 from Synechococcus sp. (strain WH7803).